The following is a 432-amino-acid chain: Repulsive guidance molecule A (432 aa).

The first 29 residues, 1–29, serve as a signal peptide directing secretion; that stretch reads MGRGAGSTALGLFQILPVFLCIFPPVTSP. A propeptide spans 30–149 (removed in mature form); the sequence is CKILKCNSEF…NYTHCGLFGD (120 aa). An N-linked (GlcNAc...) asparagine glycan is attached at Asn-96. Residues 99 to 122 form a disordered region; sequence KDGPTSQPRLRTLPPGDSQERSDS. 2 cysteine pairs are disulfide-bonded: Cys-126–Cys-207 and Cys-144–Cys-296. Asn-140 is a glycosylation site (N-linked (GlcNAc...) asparagine). Asn-404 carries GPI-anchor amidated asparagine lipidation. The propeptide at 405–432 is removed in mature form; the sequence is AAPSEHPWALPALWVALLSLSQCWLGLL.

This sequence belongs to the repulsive guidance molecule (RGM) family. In terms of processing, autocatalytically cleaved at low pH; the two chains remain linked via two disulfide bonds.

The protein resides in the cell membrane. In terms of biological role, acts as an axon-specific repulsive guidance molecule in the retinotectal system. Repulsive for a subset of axons of the temporal half of the retina. Provides thus positional information for the temporal axons invading the optic tectum in the stratum opticum. The protein is Repulsive guidance molecule A (RGMA) of Gallus gallus (Chicken).